The primary structure comprises 205 residues: High frequency lysogenization protein HflD homolog (205 aa).

It belongs to the HflD family.

The protein localises to the cytoplasm. It is found in the cell inner membrane. This is High frequency lysogenization protein HflD homolog from Haemophilus influenzae (strain ATCC 51907 / DSM 11121 / KW20 / Rd).